A 556-amino-acid polypeptide reads, in one-letter code: ATP synthase subunit beta-1, mitochondrial (556 aa).

Residues 1–20 (MASRRVLSSLLRSSSGRSAA) are compositionally biased toward low complexity. The interval 1 to 37 (MASRRVLSSLLRSSSGRSAAKLGNRNPRLPSPSPARH) is disordered. The transit peptide at 1–51 (MASRRVLSSLLRSSSGRSAAKLGNRNPRLPSPSPARHAAPCSYLLGRVAEY) directs the protein to the mitochondrion. Ser-59 carries the phosphoserine modification. 231-238 (GGAGVGKT) contacts ATP.

Belongs to the ATPase alpha/beta chains family. In terms of assembly, F-type ATPases have 2 components, CF(1) - the catalytic core - and CF(0) - the membrane proton channel. CF(1) has five subunits: alpha(3), beta(3), gamma(1), delta(1), epsilon(1). CF(0) has three main subunits: a, b and c.

The protein localises to the mitochondrion. It localises to the mitochondrion inner membrane. It catalyses the reaction ATP + H2O + 4 H(+)(in) = ADP + phosphate + 5 H(+)(out). Functionally, mitochondrial membrane ATP synthase (F(1)F(0) ATP synthase or Complex V) produces ATP from ADP in the presence of a proton gradient across the membrane which is generated by electron transport complexes of the respiratory chain. F-type ATPases consist of two structural domains, F(1) - containing the extramembraneous catalytic core, and F(0) - containing the membrane proton channel, linked together by a central stalk and a peripheral stalk. During catalysis, ATP synthesis in the catalytic domain of F(1) is coupled via a rotary mechanism of the central stalk subunits to proton translocation. Subunits alpha and beta form the catalytic core in F(1). Rotation of the central stalk against the surrounding alpha(3)beta(3) subunits leads to hydrolysis of ATP in three separate catalytic sites on the beta subunits. This Arabidopsis thaliana (Mouse-ear cress) protein is ATP synthase subunit beta-1, mitochondrial.